Reading from the N-terminus, the 105-residue chain is Vacuolar ATPase assembly integral membrane protein VMA21 homolog (105 aa).

The interval 1 to 26 (MSTKNKKAAGGNGVAPKQTRQQSHDS) is disordered. The Cytoplasmic portion of the chain corresponds to 1–36 (MSTKNKKAAGGNGVAPKQTRQQSHDSQDYSSFKTVL). Residues 37-57 (FYCMLIVFLPVLTFFVLKGFV) traverse the membrane as a helical segment. The Lumenal portion of the chain corresponds to 58–68 (LDQFLDISEVK). Residues 69-89 (VNIASAVGAVVALHIALGLYI) traverse the membrane as a helical segment. The Cytoplasmic segment spans residues 90-105 (YRAYFGAPGSKGSKTD).

It belongs to the VMA21 family.

Its subcellular location is the endoplasmic reticulum membrane. It is found in the endoplasmic reticulum-Golgi intermediate compartment membrane. It localises to the cytoplasmic vesicle. The protein resides in the COPII-coated vesicle membrane. Required for the assembly of the V0 complex of the vacuolar ATPase (V-ATPase) in the endoplasmic reticulum. This Drosophila melanogaster (Fruit fly) protein is Vacuolar ATPase assembly integral membrane protein VMA21 homolog.